The following is a 317-amino-acid chain: MLRNGSIVTEFILVGFQQSSTSTRALLFALFLALYSLTMAMNGLIIFITSWTDPKLNSPMYFFLGHLSLLDVCFITTTIPQMLIHLVVRDHIVSFVCCMTQMYFVFCVGVAECILLAFMAYDRYVAICYPLNYVPIISQKVCVRLVGTAWFFGLINGIFLEYISFREPFRRDNHIESFFCEAPIVIGLSCGDPQFSLWAIFADAIVVILSPMVLTVTSYVHILATILSKASSSGRGKTFSTCASHLTVVIFLYTSAMFSYMNPHSTHGPDKDKPFSLLYTIITPMCNPIIYSFRNKEIKEAMVRALGRTRLAQPQSV.

Over 1 to 25 the chain is Extracellular; that stretch reads MLRNGSIVTEFILVGFQQSSTSTRA. N-linked (GlcNAc...) asparagine glycosylation occurs at asparagine 4. Residues 26–46 traverse the membrane as a helical segment; the sequence is LLFALFLALYSLTMAMNGLII. Residues 47 to 55 are Cytoplasmic-facing; that stretch reads FITSWTDPK. A helical membrane pass occupies residues 56-76; it reads LNSPMYFFLGHLSLLDVCFIT. Residues 77–100 lie on the Extracellular side of the membrane; it reads TTIPQMLIHLVVRDHIVSFVCCMT. An intrachain disulfide couples cysteine 98 to cysteine 190. The chain crosses the membrane as a helical span at residues 101–121; that stretch reads QMYFVFCVGVAECILLAFMAY. Residues 122–140 are Cytoplasmic-facing; the sequence is DRYVAICYPLNYVPIISQK. A helical membrane pass occupies residues 141–161; sequence VCVRLVGTAWFFGLINGIFLE. The Extracellular portion of the chain corresponds to 162–198; sequence YISFREPFRRDNHIESFFCEAPIVIGLSCGDPQFSLW. The helical transmembrane segment at 199–218 threads the bilayer; that stretch reads AIFADAIVVILSPMVLTVTS. Residues 219–238 are Cytoplasmic-facing; sequence YVHILATILSKASSSGRGKT. A helical transmembrane segment spans residues 239–259; the sequence is FSTCASHLTVVIFLYTSAMFS. Over 260-272 the chain is Extracellular; sequence YMNPHSTHGPDKD. Residues 273 to 293 traverse the membrane as a helical segment; sequence KPFSLLYTIITPMCNPIIYSF. Over 294 to 317 the chain is Cytoplasmic; the sequence is RNKEIKEAMVRALGRTRLAQPQSV.

This sequence belongs to the G-protein coupled receptor 1 family.

It is found in the cell membrane. In terms of biological role, odorant receptor. This is Olfactory receptor 10AD1 (OR10AD1) from Homo sapiens (Human).